Here is a 420-residue protein sequence, read N- to C-terminus: MEMDDDEAILLDDIYALASTPNQTIVTSSFPQTVSPGFLARRNEALAMVEVAVQSTILILTVVGNAAVLAMIVSLSRHKDLGRMYTMIGHLSCADLFVAIFNLLPQLLWDVTHRFRGGRVLCKLVKYVQVVAMYASAYVLMSTAVDRYTAICHPMRSHTWTSTTAHYLVIGAWVLALVFAVPQLVIFDYVEVVPGSGVYDCVDHFRPRWTLPVYITWFALAVYVIPLVVLATIYLRICVVVWKSANRKSTPMINVAARTSGATEQPSLDDASVSFNVADGGGVDLDPSGGGGSLSRHAAQLSHRQQQQQANNVVLSRAKTKTVKLTLTVVISYLVCWAPFFVSHIWSAWDPHAPFEGTEMVITLLLGSLNSCINPWIYLAFSDQLRRKVTQCCPRSWGQRPSTLSHDSTDFRSGSRPTHS.

Topologically, residues 1 to 54 (MEMDDDEAILLDDIYALASTPNQTIVTSSFPQTVSPGFLARRNEALAMVEVAVQ) are extracellular. Asn-22 carries an N-linked (GlcNAc...) asparagine glycan. The chain crosses the membrane as a helical span at residues 55 to 75 (STILILTVVGNAAVLAMIVSL). Residues 76 to 83 (SRHKDLGR) lie on the Cytoplasmic side of the membrane. The chain crosses the membrane as a helical span at residues 84-104 (MYTMIGHLSCADLFVAIFNLL). Residues 105–124 (PQLLWDVTHRFRGGRVLCKL) lie on the Extracellular side of the membrane. Cys-122 and Cys-201 form a disulfide bridge. A helical transmembrane segment spans residues 125–145 (VKYVQVVAMYASAYVLMSTAV). The Cytoplasmic segment spans residues 146–166 (DRYTAICHPMRSHTWTSTTAH). Residues 167-187 (YLVIGAWVLALVFAVPQLVIF) traverse the membrane as a helical segment. At 188 to 212 (DYVEVVPGSGVYDCVDHFRPRWTLP) the chain is on the extracellular side. Residues 213 to 233 (VYITWFALAVYVIPLVVLATI) form a helical membrane-spanning segment. The Cytoplasmic segment spans residues 234-328 (YLRICVVVWK…KTKTVKLTLT (95 aa)). Residues 329 to 349 (VVISYLVCWAPFFVSHIWSAW) form a helical membrane-spanning segment. Residues 350 to 360 (DPHAPFEGTEM) are Extracellular-facing. The helical transmembrane segment at 361–381 (VITLLLGSLNSCINPWIYLAF) threads the bilayer. The Cytoplasmic segment spans residues 382 to 420 (SDQLRRKVTQCCPRSWGQRPSTLSHDSTDFRSGSRPTHS). Positions 397 to 420 (WGQRPSTLSHDSTDFRSGSRPTHS) are disordered. A compositionally biased stretch (polar residues) spans 399 to 420 (QRPSTLSHDSTDFRSGSRPTHS).

The protein belongs to the G-protein coupled receptor 1 family. Vasopressin/oxytocin receptor subfamily. Nephridia in clitellum region.

Its subcellular location is the cell membrane. Receptor for annetocin. Activation by annetocin may induce egg-laying behavior through calcium-dependent signaling. In Eisenia fetida (Red wiggler worm), this protein is Annetocin receptor.